A 639-amino-acid chain; its full sequence is Mediator of RNA polymerase II transcription subunit 17 (639 aa).

Residues 160-187 (RLQNFNAAADKLLKSASRLENEVASETR) adopt a coiled-coil conformation.

This sequence belongs to the Mediator complex subunit 17 family. As to quaternary structure, component of the Mediator complex.

Its subcellular location is the nucleus. Its function is as follows. Component of the Mediator complex, a coactivator involved in the regulated transcription of nearly all RNA polymerase II-dependent genes. Mediator functions as a bridge to convey information from gene-specific regulatory proteins to the basal RNA polymerase II transcription machinery. Mediator is recruited to promoters by direct interactions with regulatory proteins and serves as a scaffold for the assembly of a functional preinitiation complex with RNA polymerase II and the general transcription factors. This is Mediator of RNA polymerase II transcription subunit 17 (srb4) from Neosartorya fischeri (strain ATCC 1020 / DSM 3700 / CBS 544.65 / FGSC A1164 / JCM 1740 / NRRL 181 / WB 181) (Aspergillus fischerianus).